The sequence spans 167 residues: Protein tyrosine phosphatase type IVA 2 (167 aa).

The region spanning 5–158 (APVEISYENM…YRPKMRLRFR (154 aa)) is the Tyrosine-protein phosphatase domain. Cysteine 46 and cysteine 101 are disulfide-bonded. Aspartate 69 serves as the catalytic Proton donor. The active-site Phosphocysteine intermediate is the cysteine 101. 102–107 (VAGLGR) is a phosphate binding site. Arginine 107 is a binding site for substrate. At cysteine 164 the chain carries Cysteine methyl ester. Cysteine 164 carries the S-farnesyl cysteine lipid modification. A propeptide spans 165 to 167 (CVQ) (removed in mature form).

Belongs to the protein-tyrosine phosphatase family. In terms of assembly, in contrast to PTP4A1 and PTP4A3, does not interact with tubulin. Interacts with RABGGTB. In terms of processing, farnesylated. Farnesylation is required for membrane targeting and for interaction with RABGGTB. Expressed in skeletal muscle, and at lower levels in liver, lung, heart, kidney, brain, testis and spleen.

It localises to the cell membrane. The protein localises to the early endosome. Its subcellular location is the cytoplasm. It catalyses the reaction O-phospho-L-tyrosyl-[protein] + H2O = L-tyrosyl-[protein] + phosphate. With respect to regulation, inhibited by sodium orthovanadate and pentamidine. Functionally, protein tyrosine phosphatase which stimulates progression from G1 into S phase during mitosis. Inhibits geranylgeranyl transferase type II activity by blocking the association between RABGGTA and RABGGTB. This chain is Protein tyrosine phosphatase type IVA 2 (Ptp4a2), found in Mus musculus (Mouse).